Reading from the N-terminus, the 348-residue chain is Phenylalanine--tRNA ligase alpha subunit (348 aa).

A Mg(2+)-binding site is contributed by Glu-262.

Belongs to the class-II aminoacyl-tRNA synthetase family. Phe-tRNA synthetase alpha subunit type 1 subfamily. As to quaternary structure, tetramer of two alpha and two beta subunits. Mg(2+) is required as a cofactor.

It localises to the cytoplasm. The enzyme catalyses tRNA(Phe) + L-phenylalanine + ATP = L-phenylalanyl-tRNA(Phe) + AMP + diphosphate + H(+). This Streptococcus pneumoniae serotype 2 (strain D39 / NCTC 7466) protein is Phenylalanine--tRNA ligase alpha subunit.